Here is a 474-residue protein sequence, read N- to C-terminus: Homeobox protein PKNOX2 (474 aa).

Positions 1–42 are disordered; it reads MMQHASPAPALTMMATQNVPPPPYQDSPQMTATAQPPSKAQA. The span at 26-38 shows a compositional bias: polar residues; it reads DSPQMTATAQPPS. In terms of domain architecture, MEIS N-terminal spans 96-179; that stretch reads GSECITSASF…MHSDNLLRND (84 aa). Residues 291 to 350 constitute a DNA-binding region (homeobox); that stretch reads KRGVLPKHATNIMRSWLFQHLMHPYPTEDEKRQIAAQTNLTLLQVNNWFINARRRILQPM. Disordered regions lie at residues 351–371, 385–405, and 423–474; these read LDASNPDPAPKAKKIKSQHRP, LQQQGGTPGTNPDGSINLDNL, and AAHD…DSLE. Residues 361-371 show a composition bias toward basic residues; the sequence is KAKKIKSQHRP. Acidic residues predominate over residues 429-456; it reads LDGTEEEDEDDMEEEEEEEEELEEEADE.

Belongs to the TALE/MEIS homeobox family.

It is found in the nucleus. The chain is Homeobox protein PKNOX2 (Pknox2) from Mus musculus (Mouse).